Reading from the N-terminus, the 212-residue chain is Thymidylate kinase (212 aa).

10-17 contacts ATP; sequence GIDGCGKT.

Belongs to the thymidylate kinase family.

It carries out the reaction dTMP + ATP = dTDP + ADP. Functionally, phosphorylation of dTMP to form dTDP in both de novo and salvage pathways of dTTP synthesis. The protein is Thymidylate kinase of Prochlorococcus marinus (strain MIT 9312).